The following is an 851-amino-acid chain: Putative cell signaling protein (851 aa).

3 stretches are compositionally biased toward basic and acidic residues: residues 165–176 (KLNEQDGKKSDN), 196–223 (DQAR…EETK), and 767–781 (SEER…LSHD). Disordered stretches follow at residues 165-223 (KLNE…EETK) and 714-781 (DDSE…LSHD).

Post-translationally, palmitoylated.

The polypeptide is Putative cell signaling protein (Schizosaccharomyces pombe (strain 972 / ATCC 24843) (Fission yeast)).